A 126-amino-acid polypeptide reads, in one-letter code: Holo-[acyl-carrier-protein] synthase (126 aa).

2 residues coordinate Mg(2+): D9 and E58.

Belongs to the P-Pant transferase superfamily. AcpS family. Mg(2+) serves as cofactor.

It is found in the cytoplasm. It carries out the reaction apo-[ACP] + CoA = holo-[ACP] + adenosine 3',5'-bisphosphate + H(+). Its function is as follows. Transfers the 4'-phosphopantetheine moiety from coenzyme A to a Ser of acyl-carrier-protein. This is Holo-[acyl-carrier-protein] synthase from Serratia proteamaculans (strain 568).